Here is a 200-residue protein sequence, read N- to C-terminus: Holliday junction resolvase RecU (200 aa).

The tract at residues 1-27 is disordered; it reads MALKYPSGKEYRGNKPNAARRPAADYA. Thr-84, Asp-86, Glu-99, and Gln-118 together coordinate Mg(2+).

The protein belongs to the RecU family. In terms of assembly, homodimer. Requires Mg(2+) as cofactor.

The protein resides in the cytoplasm. It catalyses the reaction Endonucleolytic cleavage at a junction such as a reciprocal single-stranded crossover between two homologous DNA duplexes (Holliday junction).. Its function is as follows. Endonuclease that resolves Holliday junction intermediates in genetic recombination. Cleaves mobile four-strand junctions by introducing symmetrical nicks in paired strands. Promotes annealing of linear ssDNA with homologous dsDNA. Required for DNA repair, homologous recombination and chromosome segregation. The sequence is that of Holliday junction resolvase RecU from Geobacillus kaustophilus (strain HTA426).